Reading from the N-terminus, the 37-residue chain is Large ribosomal subunit protein bL36c (37 aa).

It belongs to the bacterial ribosomal protein bL36 family.

The protein resides in the plastid. It is found in the chloroplast. This Phaeodactylum tricornutum (strain CCAP 1055/1) protein is Large ribosomal subunit protein bL36c.